The chain runs to 114 residues: Large ribosomal subunit protein uL22 (114 aa).

This sequence belongs to the universal ribosomal protein uL22 family. In terms of assembly, part of the 50S ribosomal subunit.

This protein binds specifically to 23S rRNA; its binding is stimulated by other ribosomal proteins, e.g. L4, L17, and L20. It is important during the early stages of 50S assembly. It makes multiple contacts with different domains of the 23S rRNA in the assembled 50S subunit and ribosome. In terms of biological role, the globular domain of the protein is located near the polypeptide exit tunnel on the outside of the subunit, while an extended beta-hairpin is found that lines the wall of the exit tunnel in the center of the 70S ribosome. This chain is Large ribosomal subunit protein uL22, found in Streptococcus thermophilus (strain CNRZ 1066).